Reading from the N-terminus, the 132-residue chain is Small ribosomal subunit protein uS8 (132 aa).

It belongs to the universal ribosomal protein uS8 family. Part of the 30S ribosomal subunit. Contacts proteins S5 and S12.

In terms of biological role, one of the primary rRNA binding proteins, it binds directly to 16S rRNA central domain where it helps coordinate assembly of the platform of the 30S subunit. In Exiguobacterium sibiricum (strain DSM 17290 / CCUG 55495 / CIP 109462 / JCM 13490 / 255-15), this protein is Small ribosomal subunit protein uS8.